Reading from the N-terminus, the 59-residue chain is Temperature acclimation protein A (59 aa).

A CSD domain is found at 1-55 (FNDEKGFGFITPESGPDLFVHFRAIQGNGFKSLKEGQKVTFIAVQGQKGMQADKV).

Its subcellular location is the cytoplasm. Functionally, affects cell viability at low temperatures. This is Temperature acclimation protein A (tapA) from Pseudomonas fragi.